We begin with the raw amino-acid sequence, 380 residues long: MGTLHLKQNPLLKITNKSLINLPSPSNISAWWNFGSLLGMCLILQITTGIFLAMHYTPNITTAFSSVAHITRDVQYGWLLRGLHANGASIFFICLYFHIGRGIYYGSFLNKKTWYTGIMLLFLTMATAFMGYILPWGQMSFWGATVITNLLSAIPYMGTNLVQWIWGGFSVDNATLTRFFTLHFLTPFIISSLTTIHLLLLHEKGSNNPTGLNSNPDKIPFHPYFSYKDLLGVNLLMIGLLTLTLFLPNLLTDPENFTPANPLSTPKHIKPEWYFLFAYAILRSIPNKLGGVLALLSSVTILFIMPTLHTSKQRSATFRPFTQILFWSPTADLVILTWIGAQPVEDPFIMIGQTASVFYFTLILLLIPLAAILENKLLDY.

4 helical membrane passes run 34–54 (FGSL…FLAM), 78–99 (WLLR…YFHI), 114–134 (WYTG…GYIL), and 179–199 (FFTL…IHLL). Residues His84 and His98 each coordinate heme b. Residues His183 and His197 each coordinate heme b. His202 contributes to the a ubiquinone binding site. 4 consecutive transmembrane segments (helical) span residues 227-247 (YKDL…TLFL), 289-309 (LGGV…PTLH), 321-341 (FTQI…WIGA), and 348-368 (FIMI…LLIP).

The protein belongs to the cytochrome b family. In terms of assembly, the cytochrome bc1 complex contains 3 respiratory subunits (MT-CYB, CYC1 and UQCRFS1), 2 core proteins (UQCRC1 and UQCRC2) and probably 6 low-molecular weight proteins. Heme b is required as a cofactor.

The protein resides in the mitochondrion inner membrane. Functionally, component of the ubiquinol-cytochrome c reductase complex (complex III or cytochrome b-c1 complex) that is part of the mitochondrial respiratory chain. The b-c1 complex mediates electron transfer from ubiquinol to cytochrome c. Contributes to the generation of a proton gradient across the mitochondrial membrane that is then used for ATP synthesis. The protein is Cytochrome b (MT-CYB) of Pelomedusa subrufa (African side-necked turtle).